Reading from the N-terminus, the 839-residue chain is Toll-like receptor 4 (839 aa).

Residues 1-23 (MMSASRLAGTLIPAMAFLSCVRP) form the signal peptide. The Extracellular portion of the chain corresponds to 24–631 (ESWEPCVEVV…SLNITCQMNK (608 aa)). A disulfide bridge connects residues C29 and C40. N-linked (GlcNAc...) asparagine glycosylation is present at N35. LRR repeat units follow at residues 55–76 (STKN…SFFS), 79–100 (ELQV…AYQS), 103–124 (HLST…AFSG), 127–148 (SLQK…PIGH), and 151–172 (TLKE…EYFS). N173 carries N-linked (GlcNAc...) asparagine glycosylation. LRR repeat units follow at residues 176–199 (NLEH…RVLH), 205–225 (NLSL…AFKE), and 227–247 (RLHK…KTCI). N-linked (GlcNAc...) asparagine glycosylation occurs at N205. C281 and C306 are joined by a disulfide. N-linked (GlcNAc...) asparagine glycosylation is found at N282 and N309. LRR repeat units follow at residues 331–351 (GWQH…LKLK), 352–373 (SLKR…VDLP), 374–394 (SLEF…CSQS), 400–422 (SLKY…LGLE), 423–444 (QLEH…SVFL), 448–456 (NLIYLDISH), 472–495 (SLEV…FTEL), 497–518 (NLTF…AFNS), 521–542 (SLQV…PYKC), and 545–565 (SLQV…QELQ). A disulfide bond links C390 and C391. N497 and N526 each carry an N-linked (GlcNAc...) asparagine glycan. Residue N575 is glycosylated (N-linked (GlcNAc...) asparagine). The LRRCT domain occupies 579–629 (NDFACTCEHQSFLQWIKDQRQLLVEVERMECATPSDKQGMPVLSLNITCQM). Intrachain disulfides connect C583-C609 and C585-C627. N-linked (GlcNAc...) asparagine glycosylation is found at N624 and N630. Residues 632–652 (TIIGVSVLSVLVVSVVAVLVY) traverse the membrane as a helical segment. Residues 653–839 (KFYFHLMLLA…GCNWQEATSI (187 aa)) are Cytoplasmic-facing. Residues 672–815 (NIYDAFVIYS…IFWRRLRKAL (144 aa)) form the TIR domain.

This sequence belongs to the Toll-like receptor family. In terms of assembly, belongs to the lipopolysaccharide (LPS) receptor, a multi-protein complex containing at least CD14, LY96 and TLR4. Binding to bacterial LPS leads to homodimerization. Interacts with LY96 via the extracellular domain. Interacts with MYD88. Interacts (via TIR domains) with TIRAP. Interacts with TICAM2. Interacts with NOX4. Interacts with CNPY3. Interacts with HSP90B1. The interaction with both CNPY3 and HSP90B1 is required for proper folding in the endoplasmic reticulum. Interacts with MAP3K21; this interaction leads to negative regulation of TLR4 signaling. Interacts with CD36, following CD36 stimulation by oxLDL or amyloid-beta 42, and forms a heterodimer with TLR6. The trimeric complex is internalized and triggers inflammatory response. LYN kinase activity facilitates TLR4-TLR6 heterodimerization and signal initiation. Interacts with TICAM1 in response to LPS in a WDFY1-dependent manner. Interacts with WDFY1 in response to LPS. Interacts with SMPDL3B. Interacts with CEACAM1; upon lipopolysaccharide stimulation, forms a complex including TLR4 and the phosphorylated form of SYK and CEACAM1, which in turn, recruits PTPN6 that dephosphorylates SYK, reducing the production of reactive oxygen species (ROS) and lysosome disruption, which in turn, reduces the activity of the inflammasome. Interacts with RFTN1; the interaction occurs in response to lipopolysaccharide stimulation. Interacts with SCIMP; the interaction occurs in response to lipopolysaccharide stimulation and is enhanced by phosphorylation of SCIMP by LYN. This interaction facilitates the phosphorylation of TLR4 by LYN which elicits a selective cytokine response in macrophages. Interacts with TRAF3IP3. Interacts with TREM1; this interaction enhances TLR4-mediated inflammatory response. Interacts with ZG16B/PAUF. Interacts with CD82; this interaction inhibits TLR4-mediated signaling pathway. Interacts with neutrophil recruitment protein from Aedes aegypti saliva; the interaction probably promotes activation of canonical NF-kappa-B signaling in skin-resident macrophages and subsequent expression of neutrophil chemoattractants. As to quaternary structure, (Microbial infection) In case of infection, interacts with uropathogenic E.coli protein TcpC. (Microbial infection) In case of infection, interacts with B.melitensis protein TcpB; TcpB abolishes the TLR4-TIRAP interaction in vitro. In terms of assembly, (Microbial infection) Interacts with ebolavirus protein GP; this interaction leads to the production of proinflammatory cytokines and suppressor of cytokine signaling 1/SOCS1. Post-translationally, N-Glycosylation of Asn-526 and Asn-575 by STT3A-containing OST-A complex is necessary for the expression of TLR4 on the cell surface and the LPS-response. Likewise, mutants lacking two or more of the other N-glycosylation sites were deficient in interaction with LPS. In terms of processing, phosphorylated on tyrosine residues by LYN after binding lipopolysaccharide. Ubiquitinated by RNF128 via 'Lys-28'-linked polyubiquitin chains, leading to proteasomal degradation. Highly expressed in placenta, spleen and peripheral blood leukocytes. Detected in monocytes, macrophages, dendritic cells and several types of T-cells. Expressed in pancreatic cancer cells but not in normal pancreatic cells (at protein level).

It is found in the cell membrane. It localises to the early endosome. The protein localises to the cell projection. Its subcellular location is the ruffle. Transmembrane receptor that functions as a pattern recognition receptor recognizing pathogen- and damage-associated molecular patterns (PAMPs and DAMPs) to induce innate immune responses via downstream signaling pathways. At the plasma membrane, cooperates with LY96 to mediate the innate immune response to bacterial lipopolysaccharide (LPS). Also involved in LPS-independent inflammatory responses triggered by free fatty acids, such as palmitate, and Ni(2+). Mechanistically, acts via MYD88, TIRAP and TRAF6, leading to NF-kappa-B activation, cytokine secretion and the inflammatory response. Alternatively, CD14-mediated TLR4 internalization via endocytosis is associated with the initiation of a MYD88-independent signaling via the TICAM1-TBK1-IRF3 axis leading to type I interferon production. In addition to the secretion of proinflammatory cytokines, initiates the activation of NLRP3 inflammasome and formation of a positive feedback loop between autophagy and NF-kappa-B signaling cascade. In complex with TLR6, promotes inflammation in monocytes/macrophages by associating with TLR6 and the receptor CD86. Upon ligand binding, such as oxLDL or amyloid-beta 42, the TLR4:TLR6 complex is internalized and triggers inflammatory response, leading to NF-kappa-B-dependent production of CXCL1, CXCL2 and CCL9 cytokines, via MYD88 signaling pathway, and CCL5 cytokine, via TICAM1 signaling pathway. In myeloid dendritic cells, vesicular stomatitis virus glycoprotein G but not LPS promotes the activation of IRF7, leading to type I IFN production in a CD14-dependent manner. Required for the migration-promoting effects of ZG16B/PAUF on pancreatic cancer cells. The protein is Toll-like receptor 4 (TLR4) of Homo sapiens (Human).